The following is a 466-amino-acid chain: Phosphomethylpyrimidine synthase (466 aa).

Substrate-binding positions include Asn-80, Met-109, Tyr-139, His-175, 195–197, 236–239, and Glu-275; these read SRG and DSLR. His-279 provides a ligand contact to Zn(2+). Substrate is bound at residue Tyr-302. A Zn(2+)-binding site is contributed by His-343. [4Fe-4S] cluster contacts are provided by Cys-423, Cys-426, and Cys-431.

The protein belongs to the ThiC family. [4Fe-4S] cluster serves as cofactor.

It carries out the reaction 5-amino-1-(5-phospho-beta-D-ribosyl)imidazole + S-adenosyl-L-methionine = 4-amino-2-methyl-5-(phosphooxymethyl)pyrimidine + CO + 5'-deoxyadenosine + formate + L-methionine + 3 H(+). It functions in the pathway cofactor biosynthesis; thiamine diphosphate biosynthesis. Functionally, catalyzes the synthesis of the hydroxymethylpyrimidine phosphate (HMP-P) moiety of thiamine from aminoimidazole ribotide (AIR) in a radical S-adenosyl-L-methionine (SAM)-dependent reaction. This chain is Phosphomethylpyrimidine synthase, found in Prochlorococcus marinus (strain NATL1A).